The primary structure comprises 160 residues: Large ribosomal subunit protein uL13 (160 aa).

This sequence belongs to the universal ribosomal protein uL13 family. In terms of assembly, part of the 50S ribosomal subunit.

In terms of biological role, this protein is one of the early assembly proteins of the 50S ribosomal subunit, although it is not seen to bind rRNA by itself. It is important during the early stages of 50S assembly. This chain is Large ribosomal subunit protein uL13, found in Orientia tsutsugamushi (strain Boryong) (Rickettsia tsutsugamushi).